The following is a 235-amino-acid chain: Phosphoribosylaminoimidazole-succinocarboxamide synthase (235 aa).

The protein belongs to the SAICAR synthetase family.

The catalysed reaction is 5-amino-1-(5-phospho-D-ribosyl)imidazole-4-carboxylate + L-aspartate + ATP = (2S)-2-[5-amino-1-(5-phospho-beta-D-ribosyl)imidazole-4-carboxamido]succinate + ADP + phosphate + 2 H(+). It participates in purine metabolism; IMP biosynthesis via de novo pathway; 5-amino-1-(5-phospho-D-ribosyl)imidazole-4-carboxamide from 5-amino-1-(5-phospho-D-ribosyl)imidazole-4-carboxylate: step 1/2. The protein is Phosphoribosylaminoimidazole-succinocarboxamide synthase of Chlorobaculum parvum (strain DSM 263 / NCIMB 8327) (Chlorobium vibrioforme subsp. thiosulfatophilum).